The chain runs to 142 residues: Large ribosomal subunit protein uL13 (142 aa).

This sequence belongs to the universal ribosomal protein uL13 family. In terms of assembly, part of the 50S ribosomal subunit.

Functionally, this protein is one of the early assembly proteins of the 50S ribosomal subunit, although it is not seen to bind rRNA by itself. It is important during the early stages of 50S assembly. In Buchnera aphidicola subsp. Acyrthosiphon pisum (strain 5A), this protein is Large ribosomal subunit protein uL13.